Here is a 203-residue protein sequence, read N- to C-terminus: Glycerol-3-phosphate acyltransferase (203 aa).

The next 5 membrane-spanning stretches (helical) occupy residues 10 to 30 (LLAL…GLLI), 59 to 79 (PAAA…VILA), 87 to 107 (AAQI…YLKF), 116 to 136 (FFGT…AIWL), and 168 to 188 (LVVL…ENII).

This sequence belongs to the PlsY family. Probably interacts with PlsX.

Its subcellular location is the cell inner membrane. The catalysed reaction is an acyl phosphate + sn-glycerol 3-phosphate = a 1-acyl-sn-glycero-3-phosphate + phosphate. The protein operates within lipid metabolism; phospholipid metabolism. Functionally, catalyzes the transfer of an acyl group from acyl-phosphate (acyl-PO(4)) to glycerol-3-phosphate (G3P) to form lysophosphatidic acid (LPA). This enzyme utilizes acyl-phosphate as fatty acyl donor, but not acyl-CoA or acyl-ACP. This chain is Glycerol-3-phosphate acyltransferase, found in Dinoroseobacter shibae (strain DSM 16493 / NCIMB 14021 / DFL 12).